We begin with the raw amino-acid sequence, 623 residues long: Heterogeneous nuclear ribonucleoprotein L (623 aa).

The segment covering 1–16 (MSRRLLPRAEKRRRRL) has biased composition (basic residues). The tract at residues 1-97 (MSRRLLPRAE…NYDDPHKTPA (97 aa)) is disordered. Basic and acidic residues predominate over residues 17–27 (EQRQQPDEQLR). Residues 28–37 (RAGAMVKMAA) show a composition bias toward low complexity. Over residues 38 to 54 (AGGGGGGGRYYGGGNEG) the composition is skewed to gly residues. Glycyl lysine isopeptide (Lys-Gly) (interchain with G-Cter in SUMO2) cross-links involve residues Lys-59 and Lys-62. Residues 69–87 (QHGGGGGGGSGAAGGGGGE) are compositionally biased toward gly residues. Ser-98 is modified (phosphoserine). The 75-residue stretch at 99-173 (PVVHIRGLID…HPAFVNYSTS (75 aa)) folds into the RRM 1 domain. Residue Lys-133 forms a Glycyl lysine isopeptide (Lys-Gly) (interchain with G-Cter in SUMO2) linkage. At Ser-182 the chain carries Phosphoserine. The region spanning 190 to 267 (SVLLFTILNP…CTLKIEYAKP (78 aa)) is the RRM 2 domain. Lys-266 carries the N6-acetyllysine modification. Polar residues predominate over residues 281–298 (DYTNPNLSGQGDPGSNPN). The tract at residues 281-413 (DYTNPNLSGQ…PPPPDYGPHA (133 aa)) is disordered. Phosphoserine is present on residues Ser-288 and Ser-295. Lys-299 participates in a covalent cross-link: Glycyl lysine isopeptide (Lys-Gly) (interchain with G-Cter in SUMO2). 2 positions are modified to asymmetric dimethylarginine: Arg-388 and Arg-392. A compositionally biased stretch (pro residues) spans 398–409 (GHPPPPPPPPDY). Ser-415 carries the phosphoserine modification. 2 consecutive RRM domains span residues 416 to 490 (PVLM…VSKQ) and 498 to 586 (SYGL…WDSK). Ser-578 is subject to Phosphoserine; by CaMK4. Lys-602 participates in a covalent cross-link: Glycyl lysine isopeptide (Lys-Gly) (interchain with G-Cter in SUMO2).

As to quaternary structure, identified in a IGF2BP1-dependent mRNP granule complex containing untranslated mRNAs. Interacts with HNRNPLL. Interacts with APEX1; the interaction is DNA-dependent. Component of a complex with SETD2. Interacts with ELAVL1. Part of a transcription inhibitory ribonucleoprotein complex composed at least of the circular RNA circZNF827, ZNF827 and HNRNPK. Interacts with CHD8 in an RNA-dependent manner. Post-translationally, several isoelectric forms of the L protein are probably the results of post-translational modifications. In terms of processing, phosphorylation at Ser-578 by CaMK4 enhances interaction with a CaMK4-responsive RNA element (CaRRE1), and prevents inclusion of the stress axis-regulated exon (STREX) of the KCNMA1 potassium channel transcripts upon membrane depolarization.

Its subcellular location is the nucleus. It is found in the nucleoplasm. The protein resides in the cytoplasm. In terms of biological role, splicing factor binding to exonic or intronic sites and acting as either an activator or repressor of exon inclusion. Exhibits a binding preference for CA-rich elements. Component of the heterogeneous nuclear ribonucleoprotein (hnRNP) complexes and associated with most nascent transcripts. Associates, together with APEX1, to the negative calcium responsive element (nCaRE) B2 of the APEX2 promoter. As part of a ribonucleoprotein complex composed at least of ZNF827, HNRNPK and the circular RNA circZNF827 that nucleates the complex on chromatin, may negatively regulate the transcription of genes involved in neuronal differentiation. Regulates alternative splicing of a core group of genes involved in neuronal differentiation, likely by mediating H3K36me3-coupled transcription elongation and co-transcriptional RNA processing via interaction with CHD8. This is Heterogeneous nuclear ribonucleoprotein L from Rattus norvegicus (Rat).